The chain runs to 293 residues: 33 kDa chaperonin (293 aa).

Intrachain disulfides connect Cys235–Cys237 and Cys267–Cys270.

Belongs to the HSP33 family. Post-translationally, under oxidizing conditions two disulfide bonds are formed involving the reactive cysteines. Under reducing conditions zinc is bound to the reactive cysteines and the protein is inactive.

The protein resides in the cytoplasm. Functionally, redox regulated molecular chaperone. Protects both thermally unfolding and oxidatively damaged proteins from irreversible aggregation. Plays an important role in the bacterial defense system toward oxidative stress. The polypeptide is 33 kDa chaperonin (Deinococcus radiodurans (strain ATCC 13939 / DSM 20539 / JCM 16871 / CCUG 27074 / LMG 4051 / NBRC 15346 / NCIMB 9279 / VKM B-1422 / R1)).